We begin with the raw amino-acid sequence, 227 residues long: MAHRAQVGLQDATSPIMEELVIFHDHALMIIFLICFLVLYALFLTLTTKLTNTNISDAQEMETIWTTLPAIILILIALPSLRILYLTDEINDPSFTIKSIGHQWYWTYEYTDYGGLIFNSYMLPPLFLEPGDLRLLDVDNRVVLPVEAPVRMMITSQDVLHSWTVPSLGLKTDAIPGRLNQTTFTATRPGVYYGQCSEICGANHSFMPIVLELIPLKIFEMGPVFAL.

Topologically, residues 1–14 (MAHRAQVGLQDATS) are mitochondrial intermembrane. A helical membrane pass occupies residues 15–45 (PIMEELVIFHDHALMIIFLICFLVLYALFLT). The Mitochondrial matrix segment spans residues 46 to 59 (LTTKLTNTNISDAQ). Residues 60–87 (EMETIWTTLPAIILILIALPSLRILYLT) traverse the membrane as a helical segment. The Mitochondrial intermembrane segment spans residues 88–227 (DEINDPSFTI…IFEMGPVFAL (140 aa)). Positions 161, 196, 198, 200, 204, and 207 each coordinate Cu cation. Residue glutamate 198 participates in Mg(2+) binding.

The protein belongs to the cytochrome c oxidase subunit 2 family. As to quaternary structure, component of the cytochrome c oxidase (complex IV, CIV), a multisubunit enzyme composed of 14 subunits. The complex is composed of a catalytic core of 3 subunits MT-CO1, MT-CO2 and MT-CO3, encoded in the mitochondrial DNA, and 11 supernumerary subunits COX4I, COX5A, COX5B, COX6A, COX6B, COX6C, COX7A, COX7B, COX7C, COX8 and NDUFA4, which are encoded in the nuclear genome. The complex exists as a monomer or a dimer and forms supercomplexes (SCs) in the inner mitochondrial membrane with NADH-ubiquinone oxidoreductase (complex I, CI) and ubiquinol-cytochrome c oxidoreductase (cytochrome b-c1 complex, complex III, CIII), resulting in different assemblies (supercomplex SCI(1)III(2)IV(1) and megacomplex MCI(2)III(2)IV(2)). Found in a complex with TMEM177, COA6, COX18, COX20, SCO1 and SCO2. Interacts with TMEM177 in a COX20-dependent manner. Interacts with COX20. Interacts with COX16. The cofactor is Cu cation.

Its subcellular location is the mitochondrion inner membrane. The catalysed reaction is 4 Fe(II)-[cytochrome c] + O2 + 8 H(+)(in) = 4 Fe(III)-[cytochrome c] + 2 H2O + 4 H(+)(out). Component of the cytochrome c oxidase, the last enzyme in the mitochondrial electron transport chain which drives oxidative phosphorylation. The respiratory chain contains 3 multisubunit complexes succinate dehydrogenase (complex II, CII), ubiquinol-cytochrome c oxidoreductase (cytochrome b-c1 complex, complex III, CIII) and cytochrome c oxidase (complex IV, CIV), that cooperate to transfer electrons derived from NADH and succinate to molecular oxygen, creating an electrochemical gradient over the inner membrane that drives transmembrane transport and the ATP synthase. Cytochrome c oxidase is the component of the respiratory chain that catalyzes the reduction of oxygen to water. Electrons originating from reduced cytochrome c in the intermembrane space (IMS) are transferred via the dinuclear copper A center (CU(A)) of subunit 2 and heme A of subunit 1 to the active site in subunit 1, a binuclear center (BNC) formed by heme A3 and copper B (CU(B)). The BNC reduces molecular oxygen to 2 water molecules using 4 electrons from cytochrome c in the IMS and 4 protons from the mitochondrial matrix. In Pongo pygmaeus (Bornean orangutan), this protein is Cytochrome c oxidase subunit 2 (MT-CO2).